A 317-amino-acid polypeptide reads, in one-letter code: Transaldolase 1 (317 aa).

The Schiff-base intermediate with substrate role is filled by Lys132.

It belongs to the transaldolase family. Type 1 subfamily. Homodimer.

It localises to the cytoplasm. It carries out the reaction D-sedoheptulose 7-phosphate + D-glyceraldehyde 3-phosphate = D-erythrose 4-phosphate + beta-D-fructose 6-phosphate. It functions in the pathway carbohydrate degradation; pentose phosphate pathway; D-glyceraldehyde 3-phosphate and beta-D-fructose 6-phosphate from D-ribose 5-phosphate and D-xylulose 5-phosphate (non-oxidative stage): step 2/3. Functionally, transaldolase is important for the balance of metabolites in the pentose-phosphate pathway. The polypeptide is Transaldolase 1 (Salmonella paratyphi A (strain ATCC 9150 / SARB42)).